A 97-amino-acid polypeptide reads, in one-letter code: Large ribosomal subunit protein bL25 (97 aa).

The protein belongs to the bacterial ribosomal protein bL25 family. Part of the 50S ribosomal subunit; part of the 5S rRNA/L5/L18/L25 subcomplex. Contacts the 5S rRNA. Binds to the 5S rRNA independently of L5 and L18.

This is one of the proteins that binds to the 5S RNA in the ribosome where it forms part of the central protuberance. The chain is Large ribosomal subunit protein bL25 from Blochmanniella pennsylvanica (strain BPEN).